The following is a 321-amino-acid chain: Peroxidase 42 (321 aa).

Residues 1-29 (MATSSGSCLIISLLVVVVAAALSASTASA) form the signal peptide. At Gln-30 the chain carries Pyrrolidone carboxylic acid. 4 disulfides stabilise this stretch: Cys-40-Cys-118, Cys-73-Cys-78, Cys-124-Cys-315, and Cys-202-Cys-227. His-71 (proton acceptor) is an active-site residue. 5 residues coordinate Ca(2+): Asp-72, Ile-75, Gly-77, Asp-79, and Ser-81. N-linked (GlcNAc...) asparagine glycosylation is found at Asn-85 and Asn-96. Pro-165 contributes to the substrate binding site. His-195 is a binding site for heme b. Thr-196 is a Ca(2+) binding site. Asn-211 carries N-linked (GlcNAc...) asparagine glycosylation. Residues Asp-239, Thr-242, and Gly-247 each coordinate Ca(2+). Asn-270 is a glycosylation site (N-linked (GlcNAc...) asparagine).

It belongs to the peroxidase family. Classical plant (class III) peroxidase subfamily. Requires heme b as cofactor. The cofactor is Ca(2+).

The protein localises to the secreted. It catalyses the reaction 2 a phenolic donor + H2O2 = 2 a phenolic radical donor + 2 H2O. In terms of biological role, removal of H(2)O(2), oxidation of toxic reductants, biosynthesis and degradation of lignin, suberization, auxin catabolism, response to environmental stresses such as wounding, pathogen attack and oxidative stress. These functions might be dependent on each isozyme/isoform in each plant tissue. This chain is Peroxidase 42 (PER42), found in Zea mays (Maize).